Here is a 930-residue protein sequence, read N- to C-terminus: Translation initiation factor IF-2 (930 aa).

Over residues 50-67 (FKPAAAPKVEAKPAAPKV) the composition is skewed to low complexity. Disordered regions lie at residues 50 to 217 (FKPA…SSEE) and 260 to 346 (EVVP…HELP). Composition is skewed to basic and acidic residues over residues 68 to 90 (SAEK…EAKP) and 110 to 125 (FKAE…AERR). The span at 129–141 (KGNNRDQQQNGNR) shows a compositional bias: low complexity. Basic and acidic residues-rich tracts occupy residues 157 to 167 (RDNRRFNDQAK) and 262 to 295 (VPEK…DGPR). Residues 309-318 (NQKNSNWNNN) show a composition bias toward low complexity. Residues 337–346 (VTERKFHELP) show a composition bias toward basic and acidic residues. The tr-type G domain occupies 432-599 (ERPPVVTIMG…TVLLVAEIQE (168 aa)). The segment at 441 to 448 (GHVDHGKT) is G1. Position 441–448 (441–448 (GHVDHGKT)) interacts with GTP. The tract at residues 466–470 (GITQH) is G2. The segment at 487 to 490 (DTPG) is G3. GTP is bound by residues 487–491 (DTPGH) and 541–544 (NKID). The tract at residues 541-544 (NKID) is G4. The segment at 577-579 (SAK) is G5.

It belongs to the TRAFAC class translation factor GTPase superfamily. Classic translation factor GTPase family. IF-2 subfamily.

The protein resides in the cytoplasm. One of the essential components for the initiation of protein synthesis. Protects formylmethionyl-tRNA from spontaneous hydrolysis and promotes its binding to the 30S ribosomal subunits. Also involved in the hydrolysis of GTP during the formation of the 70S ribosomal complex. This is Translation initiation factor IF-2 from Streptococcus pneumoniae (strain Taiwan19F-14).